The following is a 724-amino-acid chain: Probable metal-nicotianamine transporter YSL8 (724 aa).

The interval 1–58 (MRKGGLTPDRDRQIEEHELQETGISPDIERLKRNINATPYQREEEEEDREEQEESVEG) is disordered. Residues 8–20 (PDRDRQIEEHELQ) show a composition bias toward basic and acidic residues. A Phosphoserine modification is found at S25. The span at 43–56 (EEEEEDREEQEESV) shows a compositional bias: acidic residues. The next 7 membrane-spanning stretches (helical) occupy residues 72-92 (LTIRAFVVSFALSILFSFIVM), 96-116 (LTTGIIPSLNVSAGLLGFFFV), 144-164 (CVVASSGIAFSGGFGTYLFAM), 184-204 (LGWMIAFLFVVSFLGLFSVVP), 245-265 (VLGKFFSFSFFWGFFQWFFTA), 304-324 (IINISLLLGGILSWGLMWPLI), and 349-369 (VFIAVATILGDGLYNFCKVLI). The disordered stretch occupies residues 386-407 (RSSLAHKEDPPASPASPLTPRI). 8 consecutive transmembrane segments (helical) span residues 423–443 (IPSWFAVGGYVVISAVSTAIL), 455–475 (IIVIYIFAPILAFCNAYGAGL), 478–497 (WSLASTYGKLAIFTIGAWAG), 501–520 (GGLLAGLAACGVMMNIVSTA), 541–561 (FVSQVIGTAMGCLVSPCVFWL), 603–623 (LMLCYVFFGVAILINLIKDCL), 641–661 (FFLGPYFAIDMCVGSFILFVW), and 679–699 (GLICGDGIWTLPSSVLAIAGV).

This sequence belongs to the YSL (TC 2.A.67.2) family.

It is found in the membrane. In terms of biological role, may be involved in the transport of nicotianamine-chelated metals. The chain is Probable metal-nicotianamine transporter YSL8 (YSL8) from Arabidopsis thaliana (Mouse-ear cress).